The sequence spans 119 residues: MSASVASVISRFLEEYLSSTPQRLKLLDAYLLYILLTGALQFGYCLLVGTFPFNSFLSGFISCVGSFILAGNGSLRNRSNNVFTLVRCFSSLVTLFYSRSPPREVPRGACIALFCERGN.

Residue Ser2 is modified to N-acetylserine. At Ser2 to Tyr30 the chain is on the cytoplasmic side. The helical transmembrane segment at Leu31 to Phe51 threads the bilayer. At Pro52 to Asn54 the chain is on the lumenal side. The chain crosses the membrane as a helical span at residues Ser55–Leu75. Residues Arg76–Asn81 lie on the Cytoplasmic side of the membrane. The chain crosses the membrane as a helical span at residues Val82 to Ser98. Over Arg99–Asn119 the chain is Lumenal.

This sequence belongs to the DAD/OST2 family. Component of the oligosaccharyltransferase (OST) complex. OST exists in two different complex forms which contain common core subunits RPN1, RPN2, OST48, OST4, DAD1 and TMEM258, either STT3A or STT3B as catalytic subunits, and form-specific accessory subunits. STT3A complex assembly occurs through the formation of 3 subcomplexes. Subcomplex 1 contains RPN1 and TMEM258, subcomplex 2 contains the STT3A-specific subunits STT3A, DC2/OSTC, and KCP2 as well as the core subunit OST4, and subcomplex 3 contains RPN2, DAD1, and OST48. The STT3A complex can form stable complexes with the Sec61 complex or with both the Sec61 and TRAP complexes.

The protein resides in the endoplasmic reticulum membrane. It participates in protein modification; protein glycosylation. Subunit of the oligosaccharyl transferase (OST) complex that catalyzes the initial transfer of a defined glycan (Glc(3)Man(9)GlcNAc(2) in eukaryotes) from the lipid carrier dolichol-pyrophosphate to an asparagine residue within an Asn-X-Ser/Thr consensus motif in nascent polypeptide chains, the first step in protein N-glycosylation. N-glycosylation occurs cotranslationally and the complex associates with the Sec61 complex at the channel-forming translocon complex that mediates protein translocation across the endoplasmic reticulum (ER). All subunits are required for a maximal enzyme activity. The polypeptide is Dolichyl-diphosphooligosaccharide--protein glycosyltransferase subunit DAD1 (Canis lupus familiaris (Dog)).